The primary structure comprises 222 residues: Triosephosphate isomerase (222 aa).

9–11 is a substrate binding site; sequence NYK. H93 serves as the catalytic Electrophile. Residue E141 is the Proton acceptor of the active site. Substrate-binding positions include I146, G181, and 202 to 203; that span reads AS.

It belongs to the triosephosphate isomerase family. In terms of assembly, homotetramer; dimer of dimers.

The protein resides in the cytoplasm. It catalyses the reaction D-glyceraldehyde 3-phosphate = dihydroxyacetone phosphate. It functions in the pathway carbohydrate biosynthesis; gluconeogenesis. It participates in carbohydrate degradation; glycolysis; D-glyceraldehyde 3-phosphate from glycerone phosphate: step 1/1. Involved in the gluconeogenesis. Catalyzes stereospecifically the conversion of dihydroxyacetone phosphate (DHAP) to D-glyceraldehyde-3-phosphate (G3P). The sequence is that of Triosephosphate isomerase from Methanobrevibacter smithii (strain ATCC 35061 / DSM 861 / OCM 144 / PS).